A 189-amino-acid polypeptide reads, in one-letter code: Small ribosomal subunit protein uS7 (189 aa).

This sequence belongs to the universal ribosomal protein uS7 family. Component of the small ribosomal subunit.

Its subcellular location is the cytoplasm. The chain is Small ribosomal subunit protein uS7 (RPS5) from Encephalitozoon cuniculi (strain GB-M1) (Microsporidian parasite).